We begin with the raw amino-acid sequence, 102 residues long: MAKKSIVQRNLRRIKLCDQYGEKRERLKSIINNKNIPIGERFAAQNKLIKELPRDSSKIRIRNRCALTGRPRGVYRKFGLCRIVLRGLCSFGKIPGITKSSW.

The protein belongs to the universal ribosomal protein uS14 family. Part of the 30S ribosomal subunit. Contacts proteins S3 and S10.

Functionally, binds 16S rRNA, required for the assembly of 30S particles and may also be responsible for determining the conformation of the 16S rRNA at the A site. The protein is Small ribosomal subunit protein uS14 of Wolbachia sp. subsp. Brugia malayi (strain TRS).